Consider the following 144-residue polypeptide: NADH-ubiquinone oxidoreductase chain 6 (144 aa).

5 helical membrane passes run 1-21 (MVKV…INID), 25-45 (SSFF…MSMH), 46-66 (IWFS…ILVY), 79-99 (YMAV…VLTY), and 108-128 (FYYS…LFFM).

Belongs to the complex I subunit 6 family.

Its subcellular location is the mitochondrion membrane. It catalyses the reaction a ubiquinone + NADH + 5 H(+)(in) = a ubiquinol + NAD(+) + 4 H(+)(out). In terms of biological role, core subunit of the mitochondrial membrane respiratory chain NADH dehydrogenase (Complex I) that is believed to belong to the minimal assembly required for catalysis. Complex I functions in the transfer of electrons from NADH to the respiratory chain. The immediate electron acceptor for the enzyme is believed to be ubiquinone. The protein is NADH-ubiquinone oxidoreductase chain 6 of Caenorhabditis elegans.